The chain runs to 49 residues: Light-harvesting protein B-875 beta chain (49 aa).

Residues 2–27 (ADKSDLGYTGLTDEQAQELHSVYMSG) are Cytoplasmic-facing. A bacteriochlorophyll-binding residues include His-21 and His-39. Residues 28–45 (LWPFSAVAIVAHLAVYIW) form a helical; Signal-anchor for type II membrane protein membrane-spanning segment. Over 46-49 (RPWF) the chain is Periplasmic.

It belongs to the antenna complex beta subunit family. In terms of assembly, the core complex is formed by different alpha and beta chains, binding bacteriochlorophyll molecules, and arranged most probably in tetrameric structures disposed around the reaction center. The non-pigmented gamma chains may constitute additional components.

Its subcellular location is the cell inner membrane. Functionally, antenna complexes are light-harvesting systems, which transfer the excitation energy to the reaction centers. The polypeptide is Light-harvesting protein B-875 beta chain (pufB) (Cereibacter sphaeroides (Rhodobacter sphaeroides)).